Reading from the N-terminus, the 673-residue chain is Methionine--tRNA ligase (673 aa).

Residues 14–24 (YYPSGKLHIGN) carry the 'HIGH' region motif. The short motif at 310–314 (KMSKS) is the 'KMSKS' region element. Residue lysine 313 coordinates ATP. Positions 571-673 (VFDKVELKVA…SEAPNGSSIS (103 aa)) constitute a tRNA-binding domain.

It belongs to the class-I aminoacyl-tRNA synthetase family. MetG type 2B subfamily. As to quaternary structure, homodimer.

The protein localises to the cytoplasm. The catalysed reaction is tRNA(Met) + L-methionine + ATP = L-methionyl-tRNA(Met) + AMP + diphosphate. In terms of biological role, is required not only for elongation of protein synthesis but also for the initiation of all mRNA translation through initiator tRNA(fMet) aminoacylation. This Oceanobacillus iheyensis (strain DSM 14371 / CIP 107618 / JCM 11309 / KCTC 3954 / HTE831) protein is Methionine--tRNA ligase (metG).